Here is an 82-residue protein sequence, read N- to C-terminus: Small ribosomal subunit protein uS17 (82 aa).

This sequence belongs to the universal ribosomal protein uS17 family. As to quaternary structure, part of the 30S ribosomal subunit.

Functionally, one of the primary rRNA binding proteins, it binds specifically to the 5'-end of 16S ribosomal RNA. The sequence is that of Small ribosomal subunit protein uS17 from Aeromonas salmonicida (strain A449).